The sequence spans 464 residues: Protein FAM90A20 (464 aa).

6 disordered regions span residues 16–42, 71–213, 228–247, 254–273, 309–389, and 418–437; these read RAQTLQKQRRAPVGPRAPPPDEEDPRL, ATLG…IPRP, PTHSSPEGSCREVPQAASKT, VRTQAQDKRPAVTSQPCPSA, RLGP…HDGA, and EKPGAFLAQSPHVSEKSEAP. Composition is skewed to basic and acidic residues over residues 74–83 and 97–114; these read GKKEGKENLK and NKDKGEKEERPRQQDPQR. The segment covering 180–197 has biased composition (low complexity); it reads LASLSPLRKASLSSSSSL.

This sequence belongs to the FAM90 family.

This is Protein FAM90A20 from Homo sapiens (Human).